The primary structure comprises 160 residues: Dysbindin domain-containing protein 1 (160 aa).

Disordered regions lie at residues 1–34 (MESP…GDTC) and 95–160 (ADSD…PKED). Phosphoserine is present on residues S3, S97, and S121. The span at 127–143 (TRAEQNREKQTPSDPER) shows a compositional bias: basic and acidic residues.

This sequence belongs to the dysbindin family.

In Rattus norvegicus (Rat), this protein is Dysbindin domain-containing protein 1 (Dbndd1).